A 201-amino-acid polypeptide reads, in one-letter code: Dimethylsulfoniopropionate lyase DddQ (201 aa).

The a divalent metal cation site is built by H130, E134, Y136, and H169.

Belongs to the non-heme iron-dependent dioxygenase family. In terms of assembly, homodimer. A divalent metal cation serves as cofactor.

It carries out the reaction S,S-dimethyl-beta-propiothetin = acrylate + dimethyl sulfide + H(+). Its function is as follows. May act as a dimethylsulfoniopropionate (DMSP) in vitro, releasing dimethyl sulfide (DMS). DMS is the principal form by which sulfur is transported from oceans to the atmosphere. The real activity of the protein is however subject to debate and it is unclear whether it constitutes a real dimethylsulfoniopropionate lyase in vivo. The polypeptide is Dimethylsulfoniopropionate lyase DddQ (Ruegeria pomeroyi (strain ATCC 700808 / DSM 15171 / DSS-3) (Silicibacter pomeroyi)).